The primary structure comprises 478 residues: PRAME family member 4 (478 aa).

The stretch at 99 to 126 is one LRR 1; degenerate repeat; that stretch reads RWKLQVLDLQDVCENFWMVWSEAMAHGC. Residues 181–205 form an LRR 2; degenerate repeat; sequence HLCCKKLKILGMPFRNIRSILKMVN. One copy of the LRR 3; degenerate repeat lies at 206–232; the sequence is LDCIQEVEVNCKWVLPILTQFTPYLGH. Residues 233 to 268 form an LRR 4; degenerate repeat; the sequence is MRNLQKLILSHMDVSRYVSPEQKKEIVTQFTTQFLK. LRR repeat units lie at residues 269–294, 295–326, 327–347, 351–378, and 379–403; these read LRCL…LSCL, KTSL…SQLK, TLDL…QILL, AATL…ALSR, and CFEL…LLSH.

Belongs to the PRAME family.

This Homo sapiens (Human) protein is PRAME family member 4.